We begin with the raw amino-acid sequence, 874 residues long: Alanine--tRNA ligase (874 aa).

His562, His566, Cys664, and His668 together coordinate Zn(2+).

The protein belongs to the class-II aminoacyl-tRNA synthetase family. Zn(2+) is required as a cofactor.

It localises to the cytoplasm. It carries out the reaction tRNA(Ala) + L-alanine + ATP = L-alanyl-tRNA(Ala) + AMP + diphosphate. Its function is as follows. Catalyzes the attachment of alanine to tRNA(Ala) in a two-step reaction: alanine is first activated by ATP to form Ala-AMP and then transferred to the acceptor end of tRNA(Ala). Also edits incorrectly charged Ser-tRNA(Ala) and Gly-tRNA(Ala) via its editing domain. The protein is Alanine--tRNA ligase of Neisseria gonorrhoeae (strain ATCC 700825 / FA 1090).